The following is a 438-amino-acid chain: Xylose isomerase (438 aa).

Active-site residues include His103 and Asp106. The Mg(2+) site is built by Glu234, Glu270, His273, Asp298, Asp309, Asp311, and Asp341.

The protein belongs to the xylose isomerase family. In terms of assembly, homotetramer. Requires Mg(2+) as cofactor.

The protein resides in the cytoplasm. It catalyses the reaction alpha-D-xylose = alpha-D-xylulofuranose. The sequence is that of Xylose isomerase from Bacteroides thetaiotaomicron (strain ATCC 29148 / DSM 2079 / JCM 5827 / CCUG 10774 / NCTC 10582 / VPI-5482 / E50).